The sequence spans 132 residues: Small ribosomal subunit protein uS8 (132 aa).

This sequence belongs to the universal ribosomal protein uS8 family. Part of the 30S ribosomal subunit. Contacts proteins S5 and S12.

Functionally, one of the primary rRNA binding proteins, it binds directly to 16S rRNA central domain where it helps coordinate assembly of the platform of the 30S subunit. This Acetivibrio thermocellus (strain ATCC 27405 / DSM 1237 / JCM 9322 / NBRC 103400 / NCIMB 10682 / NRRL B-4536 / VPI 7372) (Clostridium thermocellum) protein is Small ribosomal subunit protein uS8.